The following is a 181-amino-acid chain: UPF0302 protein lmo1921 (181 aa).

Belongs to the UPF0302 family.

The polypeptide is UPF0302 protein lmo1921 (Listeria monocytogenes serovar 1/2a (strain ATCC BAA-679 / EGD-e)).